A 496-amino-acid polypeptide reads, in one-letter code: Probable diguanylate cyclase DgcJ (496 aa).

2 helical membrane-spanning segments follow: residues 11 to 31 (FIAASVIVLTSSFLIFELVAS) and 305 to 325 (ILYFITSSWKSVLFWILTALI). The GGDEF domain occupies 374–496 (SSVMFIAIDM…VNKQNKNSRS (123 aa)). Asp-382 lines the Mg(2+) pocket. The substrate site is built by Asn-390, His-395, and Asp-399. Asp-425 lines the Mg(2+) pocket. Asp-425 acts as the Proton acceptor in catalysis.

In terms of assembly, homodimer. Requires Mg(2+) as cofactor.

The protein resides in the cell inner membrane. It catalyses the reaction 2 GTP = 3',3'-c-di-GMP + 2 diphosphate. It participates in purine metabolism; 3',5'-cyclic di-GMP biosynthesis. Its function is as follows. Catalyzes the synthesis of cyclic-di-GMP (c-di-GMP) via the condensation of 2 GTP molecules. This Escherichia coli (strain K12) protein is Probable diguanylate cyclase DgcJ.